Consider the following 454-residue polypeptide: MSLNVVILAAGKGTRMRSDLPKVLHSVAHKPMVQHVIDTARELNADNINLVYGYGGELLKAKLGEQPLNFVLQAEQLGTGHAVAQAIDHINDEDTVLVLYGDVPLTRKETLEALLAARQPDGVAVLTVHLDNPTGYGRMVREGGKVVGIVEQKDASPEQLKINEINSGIMALPGKRLKAWLGRLENNNAQGEFYLTDVIAMAHADGVAIDTAHPANPIETEGANNRVQLAALERAYQARRAEELMLAGANLRDPARIDIRGDVTVGMDVMIDVNVIFEGTVKLGNNVTIGAGAILIDCDIADNADIKPYSIIEGAKLGDSASAGPFARLRPGAELHKDAHIGNFVEMKKAVLGEGSKAGHLAYLGDAEIGKGVNIGAGTITCNYDGANKHLTVIEDNVFVGSDTQLVAPVVIRKGATLGAGSTVTHEVGENELVITRVKQRHIQGWQRPVKKPK.

The pyrophosphorylase stretch occupies residues 1 to 226; it reads MSLNVVILAA…PIETEGANNR (226 aa). UDP-N-acetyl-alpha-D-glucosamine contacts are provided by residues 8–11, lysine 22, glutamine 73, 78–79, 100–102, glycine 137, glutamate 151, asparagine 166, and asparagine 224; these read LAAG, GT, and YGD. A Mg(2+)-binding site is contributed by aspartate 102. A Mg(2+)-binding site is contributed by asparagine 224. The segment at 227–247 is linker; it reads VQLAALERAYQARRAEELMLA. The interval 248–454 is N-acetyltransferase; that stretch reads GANLRDPARI…GWQRPVKKPK (207 aa). Positions 330 and 348 each coordinate UDP-N-acetyl-alpha-D-glucosamine. Residue histidine 360 is the Proton acceptor of the active site. 2 residues coordinate UDP-N-acetyl-alpha-D-glucosamine: tyrosine 363 and asparagine 374. Residues alanine 377, 383 to 384, serine 402, alanine 420, and arginine 437 each bind acetyl-CoA; that span reads NY.

It in the N-terminal section; belongs to the N-acetylglucosamine-1-phosphate uridyltransferase family. This sequence in the C-terminal section; belongs to the transferase hexapeptide repeat family. As to quaternary structure, homotrimer. Requires Mg(2+) as cofactor.

The protein localises to the cytoplasm. The catalysed reaction is alpha-D-glucosamine 1-phosphate + acetyl-CoA = N-acetyl-alpha-D-glucosamine 1-phosphate + CoA + H(+). It catalyses the reaction N-acetyl-alpha-D-glucosamine 1-phosphate + UTP + H(+) = UDP-N-acetyl-alpha-D-glucosamine + diphosphate. Its pathway is nucleotide-sugar biosynthesis; UDP-N-acetyl-alpha-D-glucosamine biosynthesis; N-acetyl-alpha-D-glucosamine 1-phosphate from alpha-D-glucosamine 6-phosphate (route II): step 2/2. It participates in nucleotide-sugar biosynthesis; UDP-N-acetyl-alpha-D-glucosamine biosynthesis; UDP-N-acetyl-alpha-D-glucosamine from N-acetyl-alpha-D-glucosamine 1-phosphate: step 1/1. It functions in the pathway bacterial outer membrane biogenesis; LPS lipid A biosynthesis. Its function is as follows. Catalyzes the last two sequential reactions in the de novo biosynthetic pathway for UDP-N-acetylglucosamine (UDP-GlcNAc). The C-terminal domain catalyzes the transfer of acetyl group from acetyl coenzyme A to glucosamine-1-phosphate (GlcN-1-P) to produce N-acetylglucosamine-1-phosphate (GlcNAc-1-P), which is converted into UDP-GlcNAc by the transfer of uridine 5-monophosphate (from uridine 5-triphosphate), a reaction catalyzed by the N-terminal domain. This Shewanella amazonensis (strain ATCC BAA-1098 / SB2B) protein is Bifunctional protein GlmU.